We begin with the raw amino-acid sequence, 89 residues long: uncharacterized protein (89 aa).

The next 2 helical transmembrane spans lie at 11-31 and 63-83; these read IFGA…PIAL and AAIS…TVVF.

Its subcellular location is the cell membrane. This is an uncharacterized protein from Methanocaldococcus jannaschii (strain ATCC 43067 / DSM 2661 / JAL-1 / JCM 10045 / NBRC 100440) (Methanococcus jannaschii).